The following is a 1762-amino-acid chain: ADAMTS-like protein 1 (1762 aa).

The signal sequence occupies residues 1-28 (MECCRRATPGTLLLFLAFLLLSSRTARS). The TSP type-1 1 domain maps to 33–82 (DGLWDAWGPWSECSRTCGGGASYSLRRCLSSKSCEGRNIRYRTCSNVDCP). 2 C-linked (Man) tryptophan glycosylation sites follow: Trp-39 and Trp-42. 3 cysteine pairs are disulfide-bonded: Cys-45/Cys-76, Cys-49/Cys-81, and Cys-60/Cys-66. Thr-48 is a glycosylation site (O-linked (Fuc...) threonine). A glycan (N-linked (GlcNAc...) asparagine) is linked at Asn-251. Residue Thr-312 is glycosylated (O-linked (Fuc...) threonine). 6 consecutive TSP type-1 domains span residues 376–424 (PLPR…MYTP), 436–493 (DCPK…TPCY), 522–584 (EEPS…GPCS), 607–665 (ELYD…NLDP), 666–729 (CPAR…FNCP), and 788–850 (CPSE…ATCA). An O-linked (Fuc...) serine glycan is attached at Ser-391. An O-linked (Fuc...) threonine glycan is attached at Thr-451. 3 cysteine pairs are disulfide-bonded: Cys-534-Cys-578, Cys-538-Cys-583, and Cys-549-Cys-567. 7 cysteine pairs are disulfide-bonded: Cys-678–Cys-723, Cys-682–Cys-728, Cys-693–Cys-712, Cys-800–Cys-844, Cys-804–Cys-849, Cys-815–Cys-832, and Cys-899–Cys-947. The Ig-like C2-type 1 domain maps to 861–963 (PHIAAARKVY…EHFVIKLIGG (103 aa)). The segment at 1120 to 1164 (LKPSERRTSPVTLSPHKHVSGFSSSLRTSSTGDAGGGSRRPHRKP) is disordered. The segment covering 1139–1151 (SGFSSSLRTSSTG) has biased composition (low complexity). 3 Ig-like C2-type domains span residues 1164 to 1266 (PTIL…IAVT), 1286 to 1369 (PAVT…TQLL), and 1395 to 1485 (PSVL…ASLV). 3 disulfides stabilise this stretch: Cys-1202–Cys-1250, Cys-1308–Cys-1353, and Cys-1418–Cys-1469. TSP type-1 domains lie at 1545-1608 (CPSR…QLCV) and 1666-1726 (CSVH…TPCE). Residues 1726 to 1762 (ENMECRDTTRYCEKVKQLKLCQLSQFKSRCCGTCGKA) form the PLAC domain.

In terms of assembly, monomer. In terms of processing, C-, N- and O-glycosylated. O-fucosylated by POFUT2 on a serine or a threonine residue found within the consensus sequence C1-X(2)-(S/T)-C2-G of the TSP type-1 repeat domains where C1 and C2 are the first and second cysteine residue of the repeat, respectively. Fucosylated repeats can then be further glycosylated by the addition of a beta-1,3-glucose residue by the glucosyltransferase, B3GALTL. Fucosylation mediates the efficient secretion of ADAMTSL1. Can also be C-glycosylated with one or two mannose molecules on tryptophan residues within the consensus sequence W-X-X-W of the TPRs, and N-glycosylated. These other glycosylations can also facilitate secretion. Post-translationally, disulfide bonds are present. Expressed primarily in adult skeletal muscle.

It localises to the secreted. It is found in the extracellular space. Its subcellular location is the extracellular matrix. This Homo sapiens (Human) protein is ADAMTS-like protein 1 (ADAMTSL1).